The sequence spans 509 residues: ATP synthase subunit alpha (509 aa).

169–176 (GDRQTGKT) serves as a coordination point for ATP.

The protein belongs to the ATPase alpha/beta chains family. F-type ATPases have 2 components, CF(1) - the catalytic core - and CF(0) - the membrane proton channel. CF(1) has five subunits: alpha(3), beta(3), gamma(1), delta(1), epsilon(1). CF(0) has four main subunits: a(1), b(1), b'(1) and c(9-12).

It localises to the cell inner membrane. The enzyme catalyses ATP + H2O + 4 H(+)(in) = ADP + phosphate + 5 H(+)(out). Produces ATP from ADP in the presence of a proton gradient across the membrane. The alpha chain is a regulatory subunit. This is ATP synthase subunit alpha from Erythrobacter litoralis (strain HTCC2594).